The chain runs to 280 residues: Borealin (280 aa).

The segment covering 140–153 (KVAAKKPSTARRTR) has biased composition (basic residues). Residues 140–187 (KVAAKKPSTARRTRASVGNVANTSKRTSKRGRATPSASKQAETSLLGY) form a disordered region.

It belongs to the borealin family. As to quaternary structure, component of the CPC at least composed of survivin/birc5, incenp, cdca8/borealin and/or cdca9/dasra-A, and aurkb/aurora-B. Interacts with incenp (via N-terminus).

Its subcellular location is the nucleus. The protein localises to the chromosome. The protein resides in the centromere. It is found in the cytoplasm. It localises to the cytoskeleton. Its subcellular location is the spindle. Functionally, component of the chromosomal passenger complex (CPC), a complex that acts as a key regulator of mitosis. The CPC complex has essential functions at the centromere in ensuring correct chromosome alignment and segregation and is required for chromatin-induced microtubule stabilization and spindle assembly. Contributes to CPC function by facilitating loading of the CPC onto chromosomes. This chain is Borealin (cdca8), found in Xenopus laevis (African clawed frog).